The chain runs to 351 residues: Dihydroorotate dehydrogenase (quinone) (351 aa).

Residues Ala61–Lys65 and Thr85 contribute to the FMN site. Residue Lys65 participates in substrate binding. Asn110–Phe114 contacts substrate. 2 residues coordinate FMN: Asn139 and Asn172. Asn172 contacts substrate. The active-site Nucleophile is the Ser175. Residue Asn177 participates in substrate binding. FMN contacts are provided by Lys217 and Thr245. Asn246–Thr247 serves as a coordination point for substrate. Residues Gly268, Gly297, and Tyr318–Ser319 contribute to the FMN site.

Belongs to the dihydroorotate dehydrogenase family. Type 2 subfamily. Monomer. The cofactor is FMN.

It localises to the cell membrane. The enzyme catalyses (S)-dihydroorotate + a quinone = orotate + a quinol. It functions in the pathway pyrimidine metabolism; UMP biosynthesis via de novo pathway; orotate from (S)-dihydroorotate (quinone route): step 1/1. In terms of biological role, catalyzes the conversion of dihydroorotate to orotate with quinone as electron acceptor. The protein is Dihydroorotate dehydrogenase (quinone) of Stenotrophomonas maltophilia (strain R551-3).